Reading from the N-terminus, the 350-residue chain is Kievitone hydratase (350 aa).

The signal sequence occupies residues 1 to 19; that stretch reads MMISSVLVAGVVAVSAALA.

In terms of assembly, homodimer. Post-translationally, glycosylated.

The protein resides in the secreted. It catalyses the reaction kievitone hydrate = kievitone + H2O. Its function is as follows. Converts fungitoxic kievitone to the less toxic kievitone hydrate, and thereby protects the pathogenic fungus against this phytoalexin. The chain is Kievitone hydratase (khs) from Fusarium solani subsp. phaseoli (Nectria haematococca).